The chain runs to 97 residues: NELL2-interacting cell ontogeny regulator 1 (97 aa).

The first 35 residues, 1-35 (MAPLPPCGPPRSPPPRLLLLLLLLSATLLGAPARA), serve as a signal peptide directing secretion.

The protein belongs to the NICOL family. As to quaternary structure, interacts with NELL2; triggers epididymal differentiation. Interacts with cell surface receptor TFRC; the interaction mediates uptake of NICOL1 into fibroblasts.

It localises to the secreted. The protein localises to the cytoplasm. Its subcellular location is the perinuclear region. Functionally, mRNA-binding protein which interacts with a range of target mRNAs including SERPINE1, ACTA2, CCN2 and COL4A1 and may promote extracellular matrix production. Binds to the 3'-UTR of SERPINE1 mRNA and stabilizes the mRNA, possibly by competing for binding with SERBP1 and preventing SERBP1-mediated mRNA degradation. Also binds to the 3'-UTR of ACTA2. Testis-derived lumicrine factor that triggers epididymal differentiation and sperm maturation. This Bos taurus (Bovine) protein is NELL2-interacting cell ontogeny regulator 1.